The chain runs to 328 residues: Tetraacyldisaccharide 4'-kinase (328 aa).

Thr-55–Thr-62 lines the ATP pocket.

The protein belongs to the LpxK family.

It carries out the reaction a lipid A disaccharide + ATP = a lipid IVA + ADP + H(+). It functions in the pathway glycolipid biosynthesis; lipid IV(A) biosynthesis; lipid IV(A) from (3R)-3-hydroxytetradecanoyl-[acyl-carrier-protein] and UDP-N-acetyl-alpha-D-glucosamine: step 6/6. Functionally, transfers the gamma-phosphate of ATP to the 4'-position of a tetraacyldisaccharide 1-phosphate intermediate (termed DS-1-P) to form tetraacyldisaccharide 1,4'-bis-phosphate (lipid IVA). This Escherichia coli (strain K12 / MC4100 / BW2952) protein is Tetraacyldisaccharide 4'-kinase.